A 422-amino-acid chain; its full sequence is CRISPR-associated endodeoxyribonuclease Cas12f1 (422 aa).

The interval 1-126 (MIKVYRYEIV…PSYKRDIPLD (126 aa)) is recognition domain (REC). The tract at residues 127 to 211 (LIKENISVNR…YLNISYDFEP (85 aa)) is wedge domain (WED). A linker region spans residues 212–220 (QTRVLDLNK). The segment at 221-370 (IMGIDLGVAV…IKIDPQYTSQ (150 aa)) is ruvC-I. Catalysis depends on residues aspartate 225 and glutamate 324. The tract at residues 371–399 (RCSECGNIDSGNRIGQAIFKCRACGYEAN) is target nucleic acid-binding (TNB). Zn(2+) contacts are provided by cysteine 372, cysteine 375, cysteine 391, and cysteine 394. Positions 400–420 (ADYNAARNIAIPNIDKIIAES) are ruvC-II. The active site involves aspartate 401.

This sequence belongs to the CRISPR-associated endonuclease Cas12f family. As to quaternary structure, an asymmetric homodimer. Guide RNA is probably required for dimerization. Mg(2+) is required as a cofactor. Zn(2+) serves as cofactor.

Functionally, CRISPR (clustered regularly interspaced short palindromic repeat), is an adaptive immune system that provides protection against mobile genetic elements (viruses, transposable elements and conjugative plasmids). CRISPR clusters contain sequences complementary to antecedent mobile elements and target invading nucleic acids. CRISPR clusters are transcribed and processed into CRISPR RNA (crRNA), which requires a trans-encoded small RNA (tracrRNA), but not this protein. Recognizes a short motif in the CRISPR repeat sequences (the 5' PAM or protospacer adjacent motif, YTT in this organism) to help distinguish self versus nonself, as targets within the CRISPR locus do not have PAMs. Has dsDNA endonuclease activity upon expression in E.coli of this protein, a mini CRISPR array and the probable tracrRNA. Plasmid cleavage is centered around positions 19-24 base pairs 3' of PAM. The mini system protects E.coli against transformation by foreign plasmids. This chain is CRISPR-associated endodeoxyribonuclease Cas12f1, found in Sulfoacidibacillus thermotolerans (Acidibacillus sulfuroxidans).